The following is a 490-amino-acid chain: Probable glycine dehydrogenase (decarboxylating) subunit 2 (490 aa).

An N6-(pyridoxal phosphate)lysine modification is found at Lys273.

This sequence belongs to the GcvP family. C-terminal subunit subfamily. In terms of assembly, the glycine cleavage system is composed of four proteins: P, T, L and H. In this organism, the P 'protein' is a heterodimer of two subunits. The cofactor is pyridoxal 5'-phosphate.

The catalysed reaction is N(6)-[(R)-lipoyl]-L-lysyl-[glycine-cleavage complex H protein] + glycine + H(+) = N(6)-[(R)-S(8)-aminomethyldihydrolipoyl]-L-lysyl-[glycine-cleavage complex H protein] + CO2. In terms of biological role, the glycine cleavage system catalyzes the degradation of glycine. The P protein binds the alpha-amino group of glycine through its pyridoxal phosphate cofactor; CO(2) is released and the remaining methylamine moiety is then transferred to the lipoamide cofactor of the H protein. This Staphylococcus aureus (strain MRSA252) protein is Probable glycine dehydrogenase (decarboxylating) subunit 2.